Consider the following 325-residue polypeptide: Aldose 1-epimerase (325 aa).

73–74 contributes to the substrate binding site; it reads NR. His-177 (proton donor) is an active-site residue. Residue Asp-230 participates in substrate binding. The active-site Proton acceptor is the Glu-283.

It belongs to the aldose epimerase family.

The catalysed reaction is alpha-D-glucose = beta-D-glucose. Its pathway is carbohydrate metabolism; hexose metabolism. This Bacillus subtilis (strain 168) protein is Aldose 1-epimerase (galM).